The following is a 195-amino-acid chain: Peptide deformylase (195 aa).

Fe cation is bound by residues Cys-102 and His-144. Glu-145 is an active-site residue. His-148 contributes to the Fe cation binding site.

This sequence belongs to the polypeptide deformylase family. Requires Fe(2+) as cofactor.

It catalyses the reaction N-terminal N-formyl-L-methionyl-[peptide] + H2O = N-terminal L-methionyl-[peptide] + formate. Removes the formyl group from the N-terminal Met of newly synthesized proteins. Requires at least a dipeptide for an efficient rate of reaction. N-terminal L-methionine is a prerequisite for activity but the enzyme has broad specificity at other positions. The polypeptide is Peptide deformylase (Salinibacter ruber (strain DSM 13855 / M31)).